The chain runs to 63 residues: Large ribosomal subunit protein uL30 (63 aa).

It belongs to the universal ribosomal protein uL30 family. As to quaternary structure, part of the 50S ribosomal subunit.

The chain is Large ribosomal subunit protein uL30 from Coxiella burnetii (strain CbuK_Q154) (Coxiella burnetii (strain Q154)).